The following is a 133-amino-acid chain: Transcription antitermination protein NusB (133 aa).

Belongs to the NusB family.

Involved in transcription antitermination. Required for transcription of ribosomal RNA (rRNA) genes. Binds specifically to the boxA antiterminator sequence of the ribosomal RNA (rrn) operons. In Shewanella denitrificans (strain OS217 / ATCC BAA-1090 / DSM 15013), this protein is Transcription antitermination protein NusB.